Reading from the N-terminus, the 304-residue chain is Fructose permease IIC component (304 aa).

The 304-residue stretch at 1-304 (IHSADPKDPT…GIIKKPVEEK (304 aa)) folds into the PTS EIIC type-2 domain. 8 consecutive transmembrane segments (helical) span residues 20 to 40 (FIGS…FIAM), 62 to 82 (NAGF…VILL), 98 to 118 (PVLI…QFVI), 140 to 160 (NLVL…GGPL), 181 to 201 (AAIM…TTFF), 214 to 234 (ITCY…FAAA), 238 to 258 (VIPA…FFRV), and 277 to 297 (LLYL…LGII).

It localises to the cell membrane. Functionally, the phosphoenolpyruvate-dependent sugar phosphotransferase system (PTS), a major carbohydrate active -transport system, catalyzes the phosphorylation of incoming sugar substrates concomitant with their translocation across the cell membrane. This system is involved in fructose transport. This chain is Fructose permease IIC component (fruA), found in Bacillus amyloliquefaciens (Bacillus velezensis).